A 1675-amino-acid polypeptide reads, in one-letter code: Coadhesin (1675 aa).

At 1-1356 (QGNYYSYGGT…TIADQADAAK (1356 aa)) the chain is on the extracellular side. In terms of domain architecture, F5/8 type C 1 spans 11–160 (TPGTPIGCTN…ICMRVGVESC (150 aa)). TSP type-1 domains lie at 168-220 (NGAW…NDCV), 224-279 (NGGW…QFCP), 281-336 (DGGW…QCCP), 338-393 (HGGW…QTCP), 403-458 (NGNY…IPCP), 460-515 (NGNW…TACP), and 517-572 (DGGW…GPCP). Disulfide bonds link cysteine 180-cysteine 216, cysteine 184-cysteine 219, cysteine 194-cysteine 206, cysteine 236-cysteine 273, cysteine 240-cysteine 278, cysteine 251-cysteine 263, cysteine 293-cysteine 330, cysteine 297-cysteine 335, cysteine 308-cysteine 320, cysteine 350-cysteine 387, cysteine 354-cysteine 392, cysteine 365-cysteine 377, cysteine 415-cysteine 452, cysteine 419-cysteine 457, cysteine 430-cysteine 442, cysteine 472-cysteine 509, cysteine 476-cysteine 514, cysteine 487-cysteine 499, cysteine 528-cysteine 566, cysteine 532-cysteine 571, and cysteine 543-cysteine 555. The tract at residues 567-588 (NKGPCPTSPPTISPPTTGSPAD) is disordered. 3 consecutive VWFA domains span residues 595–769 (DLVF…MDRI), 778–958 (DIGF…FKAL), and 966–1141 (DLTF…ISII). Residues 1144–1198 (PSGLSKWSSWSACSKTCRYLGKAGTQIRTRDCKIPELGCDGMRIDTVECNKMDCE) enclose the TSP type-1 8 domain. 3 cysteine pairs are disulfide-bonded: cysteine 1156/cysteine 1192, cysteine 1160/cysteine 1197, and cysteine 1175/cysteine 1182. The F5/8 type C 2 domain maps to 1192–1336 (CNKMDCEGCG…PCMQAAVFGC (145 aa)). The chain crosses the membrane as a helical span at residues 1357-1377 (GILIVLWILAGILTFLLLMAC). At 1378–1675 (CYYCCWHVCC…RGEEWYSRWG (298 aa)) the chain is on the cytoplasmic side. Residues 1463-1480 (EKHVTAEDVKSEKPKYSE) show a composition bias toward basic and acidic residues. A disordered region spans residues 1463–1491 (EKHVTAEDVKSEKPKYSEEASSGTIKSGS). The span at 1481–1491 (EASSGTIKSGS) shows a compositional bias: polar residues.

In terms of tissue distribution, component of the acid-insoluble and acid-soluble organic matrix of the aragonitic skeleton (at protein level).

It is found in the membrane. The protein is Coadhesin of Acropora millepora (Staghorn coral).